The sequence spans 433 residues: Enolase (433 aa).

Gln167 is a binding site for (2R)-2-phosphoglycerate. Catalysis depends on Glu209, which acts as the Proton donor. Mg(2+) is bound by residues Asp246, Glu291, and Asp318. (2R)-2-phosphoglycerate-binding residues include Lys343, Arg372, Ser373, and Lys394. Residue Lys343 is the Proton acceptor of the active site.

This sequence belongs to the enolase family. As to quaternary structure, component of the RNA degradosome, a multiprotein complex involved in RNA processing and mRNA degradation. Requires Mg(2+) as cofactor.

The protein resides in the cytoplasm. It localises to the secreted. The protein localises to the cell surface. It carries out the reaction (2R)-2-phosphoglycerate = phosphoenolpyruvate + H2O. Its pathway is carbohydrate degradation; glycolysis; pyruvate from D-glyceraldehyde 3-phosphate: step 4/5. In terms of biological role, catalyzes the reversible conversion of 2-phosphoglycerate (2-PG) into phosphoenolpyruvate (PEP). It is essential for the degradation of carbohydrates via glycolysis. This Haemophilus ducreyi (strain 35000HP / ATCC 700724) protein is Enolase.